The primary structure comprises 432 residues: Glutamyl-tRNA reductase (432 aa).

Residues 49–52 (TCNR), serine 101, 106–108 (EPQ), and glutamine 112 each bind substrate. Cysteine 50 acts as the Nucleophile in catalysis. 181-186 (GAGETI) lines the NADP(+) pocket. A disordered region spans residues 407 to 432 (FPEKPGYQHPPIATPIVRTDDADPAP).

The protein belongs to the glutamyl-tRNA reductase family. Homodimer.

The catalysed reaction is (S)-4-amino-5-oxopentanoate + tRNA(Glu) + NADP(+) = L-glutamyl-tRNA(Glu) + NADPH + H(+). It functions in the pathway porphyrin-containing compound metabolism; protoporphyrin-IX biosynthesis; 5-aminolevulinate from L-glutamyl-tRNA(Glu): step 1/2. In terms of biological role, catalyzes the NADPH-dependent reduction of glutamyl-tRNA(Glu) to glutamate 1-semialdehyde (GSA). The polypeptide is Glutamyl-tRNA reductase (Xanthomonas oryzae pv. oryzae (strain PXO99A)).